A 494-amino-acid polypeptide reads, in one-letter code: Ubiquinol-cytochrome-c reductase complex core protein I, mitochondrial (494 aa).

His70 is a Zn(2+) binding site. The active-site Proton acceptor is the Glu73. His74 and Glu150 together coordinate Zn(2+).

Belongs to the peptidase M16 family. UQCRC1/QCR1 subfamily. In terms of assembly, component of the ubiquinol-cytochrome c oxidoreductase (cytochrome b-c1 complex, complex III, CIII), a multisubunit enzyme composed of 10 subunits. The complex is composed of 3 respiratory subunits cytochrome b, cytochrome c1 and Rieske protein, 2 core protein subunits, and additional low-molecular weight protein subunits. The complex exists as an obligatory dimer and forms supercomplexes (SCs) in the inner mitochondrial membrane with cytochrome c oxidase (complex IV, CIV). It depends on Zn(2+) as a cofactor. In terms of processing, the N-terminus is blocked.

Its subcellular location is the mitochondrion inner membrane. In terms of biological role, component of the ubiquinol-cytochrome c oxidoreductase, a multisubunit transmembrane complex that is part of the mitochondrial electron transport chain which drives oxidative phosphorylation. The respiratory chain contains 3 multisubunit complexes succinate dehydrogenase (complex II, CII), ubiquinol-cytochrome c oxidoreductase (cytochrome b-c1 complex, complex III, CIII) and cytochrome c oxidase (complex IV, CIV), that cooperate to transfer electrons derived from NADH and succinate to molecular oxygen, creating an electrochemical gradient over the inner membrane that drives transmembrane transport and the ATP synthase. The cytochrome b-c1 complex catalyzes electron transfer from ubiquinol to cytochrome c, linking this redox reaction to translocation of protons across the mitochondrial inner membrane, with protons being carried across the membrane as hydrogens on the quinol. In the process called Q cycle, 2 protons are consumed from the matrix, 4 protons are released into the intermembrane space and 2 electrons are passed to cytochrome c. This chain is Ubiquinol-cytochrome-c reductase complex core protein I, mitochondrial, found in Euglena gracilis.